Here is a 489-residue protein sequence, read N- to C-terminus: NAC domain-containing protein 74 (489 aa).

Residues 9 to 159 form the NAC domain; sequence LPPGFGFHPK…AYVLCRITKR (151 aa). Residues 108 to 165 mediate DNA binding; the sequence is IGTKKTLVFHEGRPPTGRRTEWIMHEYYIDERECQACPDMKDAYVLCRITKRNDWIPG. Basic and acidic residues predominate over residues 413-427; the sequence is KNQAHDVASTKRSDA. A disordered region spans residues 413 to 435; that stretch reads KNQAHDVASTKRSDAGKPSTELS. Residues 456–476 traverse the membrane as a helical segment; it reads WNMILVAGFAIGVAVVALHIG.

Widely expressed.

It is found in the nucleus. The protein resides in the cell membrane. Functionally, transcription activator involved in heat and endoplasmic reticulum (ER) stress responses. Regulates the expression of genes involved in ER protein folding and heat stress-responsive genes. Binds directly to the promoter of BZIP74 and regulates its expression in response to heat stress. The chain is NAC domain-containing protein 74 from Oryza sativa subsp. japonica (Rice).